The following is a 375-amino-acid chain: MAVGDKITISVIKADIGGWPGHSRVHPQLVETAEDVLSKAVEDGTIIDFYVATCGDDLQLIMTHKRGVDSPDIHGLAWKAFEEATKVAKELGLYGAGQDLLKDAFSGNVRGMGPGVAEMEITLRKSEPVVTFHMDKTEPGAFNLPIFRMFADPFNTAGLIIDPKMHMGFRFEVWDILEHKRVILNTPEELYDLLALIGAKSRYVIKRVYPKPGHPIPENEPVAVVSTEKLYEVAGEYVGKDDPVAIVRAQSGLPALGEVLEPFAFPHLVSGWMRGSHNGPLMPVPMHQANPTRFDGPPRVVALGWQISPEGKLVGPVDLFDDPAFDYARQKALEITEYMRRHGPFEPHRLPLEEMEYTTLPGVLKRLTDRFEPIE.

Catalysis depends on Asp15, which acts as the Proton acceptor; for FBP phosphatase activity. Residues Asp15, His22, Asp56, and Asp57 each coordinate Mg(2+). His22 contacts beta-D-fructose 1,6-bisphosphate. Residue His22 coordinates dihydroxyacetone phosphate. Beta-D-fructose 1,6-bisphosphate is bound at residue Tyr94. Residue Gln98 participates in Mg(2+) binding. Residue 107–108 (GN) coordinates beta-D-fructose 1,6-bisphosphate. Position 135 (Asp135) interacts with Mg(2+). Lys136 provides a ligand contact to beta-D-fructose 1,6-bisphosphate. Residue Lys136 participates in dihydroxyacetone phosphate binding. The active-site Proton donor/acceptor; for FBP aldolase activity is Tyr237. Residues Lys240, Asp241, and Asp242 each contribute to the Mg(2+) site. Lys240 acts as the Schiff-base intermediate with DHAP; for FBP aldolase activity in catalysis. Residues 250-251 (QS), Arg274, Asp295, and Tyr357 contribute to the beta-D-fructose 1,6-bisphosphate site. Arg274 and Asp295 together coordinate dihydroxyacetone phosphate.

It belongs to the FBP aldolase/phosphatase family. Homooctamer; dimer of tetramers. Mg(2+) serves as cofactor.

It catalyses the reaction beta-D-fructose 1,6-bisphosphate + H2O = beta-D-fructose 6-phosphate + phosphate. The catalysed reaction is beta-D-fructose 1,6-bisphosphate = D-glyceraldehyde 3-phosphate + dihydroxyacetone phosphate. Its pathway is carbohydrate biosynthesis; gluconeogenesis. Its activity is regulated as follows. Activity is enhanced by dithioerythritol, and is slightly inhibited by fructose 2,6-bisphosphate. AMP does not inhibit the enzyme activity. Its function is as follows. Catalyzes two subsequent steps in gluconeogenesis: the aldol condensation of dihydroxyacetone phosphate (DHAP) and glyceraldehyde-3-phosphate (GA3P) to fructose-1,6-bisphosphate (FBP), and the dephosphorylation of FBP to fructose-6-phosphate (F6P). Does not display hydrolase activity against fructose 2,6-bisphosphate, fructose 6-phosphate, fructose 1-phosphate, glucose 6-phosphate, and glucose 1-phosphate. Exhibits only negligible activity on inositol-1-phosphate (IMP). Is essential for the growth of T.kodakaraensis under gluconeogenic conditions. This chain is Fructose-1,6-bisphosphate aldolase/phosphatase, found in Thermococcus kodakarensis (strain ATCC BAA-918 / JCM 12380 / KOD1) (Pyrococcus kodakaraensis (strain KOD1)).